The following is a 257-amino-acid chain: MSGFENLNTDFYQTSYSIDDQSQQSYDYGGSGGPYSKQYAGYDYSQQGRFVPPDMMQPQQPYTGQIYQPTQAYTPASPQPFYGNSFEDEPPLLEELGINFDHIWQKTLTVLHPLKVADGSIMNETDLAGPMVFCLAFGATLLLAGKIQFGYVYGISAIGCLGMFCLLNLMSMTGVSFGCVASVLGYCLLPMILLSSFAVIFSLQGMVGIILTAGIIGWCSFSASKIFISALAMEGQQLLVAYPCALLYGVFALISVF.

Residues 1-124 (MSGFENLNTD…KVADGSIMNE (124 aa)) are Cytoplasmic-facing. Residues 75–106 (PASPQPFYGNSFEDEPPLLEELGINFDHIWQK) form an interaction with Sec23 region. The chain crosses the membrane as a helical span at residues 125–145 (TDLAGPMVFCLAFGATLLLAG). A topological domain (lumenal) is located at residue K146. Residues 147-167 (IQFGYVYGISAIGCLGMFCLL) form a helical membrane-spanning segment. Residues 168-173 (NLMSMT) are Cytoplasmic-facing. Residues 174 to 194 (GVSFGCVASVLGYCLLPMILL) traverse the membrane as a helical segment. At 195-196 (SS) the chain is on the lumenal side. Residues 197 to 217 (FAVIFSLQGMVGIILTAGIIG) form a helical membrane-spanning segment. The Cytoplasmic portion of the chain corresponds to 218-236 (WCSFSASKIFISALAMEGQ). The helical transmembrane segment at 237–257 (QLLVAYPCALLYGVFALISVF) threads the bilayer.

This sequence belongs to the YIP1 family. Interacts with the COPII coat components Sec23 (SEC23A and/or SEC23B) and Sec24 (SEC24A and/or SEC24B). Interacts with YIF1A. May interact with RAB1A. Interacts with YIPF3 and YIPF4.

It localises to the endoplasmic reticulum membrane. The protein localises to the golgi apparatus. It is found in the cis-Golgi network membrane. The protein resides in the cytoplasmic vesicle. Its subcellular location is the COPII-coated vesicle. Plays a role in transport between endoplasmic reticulum and Golgi. In pancreatic beta cells, required to transport proinsulin from endoplasmic reticulum into the Golgi. The protein is Protein YIPF5 (YIPF5) of Macaca fascicularis (Crab-eating macaque).